A 372-amino-acid chain; its full sequence is NAD(P)H-quinone oxidoreductase subunit 1 (372 aa).

The next 8 helical transmembrane spans lie at 27 to 47 (IIWL…GVLV), 97 to 117 (ILFT…WLIV), 128 to 148 (VGIG…GLLM), 176 to 196 (LALS…IDIV), 204 to 224 (ILSW…ICAL), 266 to 286 (ILSA…PIPV), 308 to 328 (SIGI…AILL), and 347 to 367 (FLLP…LAFP).

It belongs to the complex I subunit 1 family. As to quaternary structure, NDH-1 is composed of at least 11 different subunits.

The protein resides in the cellular thylakoid membrane. It catalyses the reaction a plastoquinone + NADH + (n+1) H(+)(in) = a plastoquinol + NAD(+) + n H(+)(out). It carries out the reaction a plastoquinone + NADPH + (n+1) H(+)(in) = a plastoquinol + NADP(+) + n H(+)(out). In terms of biological role, NDH-1 shuttles electrons from an unknown electron donor, via FMN and iron-sulfur (Fe-S) centers, to quinones in the respiratory and/or the photosynthetic chain. The immediate electron acceptor for the enzyme in this species is believed to be plastoquinone. Couples the redox reaction to proton translocation, and thus conserves the redox energy in a proton gradient. This Prochlorococcus marinus subsp. pastoris (strain CCMP1986 / NIES-2087 / MED4) protein is NAD(P)H-quinone oxidoreductase subunit 1.